Reading from the N-terminus, the 275-residue chain is Pantothenate synthetase (275 aa).

An ATP-binding site is contributed by 26–33 (MGNLHDGH). H33 serves as the catalytic Proton donor. Q57 provides a ligand contact to (R)-pantoate. Residue Q57 coordinates beta-alanine. ATP is bound at residue 144–147 (GKKD). A (R)-pantoate-binding site is contributed by Q150. Residues V173 and 181-184 (LSSR) contribute to the ATP site.

This sequence belongs to the pantothenate synthetase family. In terms of assembly, homodimer.

The protein resides in the cytoplasm. It carries out the reaction (R)-pantoate + beta-alanine + ATP = (R)-pantothenate + AMP + diphosphate + H(+). Its pathway is cofactor biosynthesis; (R)-pantothenate biosynthesis; (R)-pantothenate from (R)-pantoate and beta-alanine: step 1/1. In terms of biological role, catalyzes the condensation of pantoate with beta-alanine in an ATP-dependent reaction via a pantoyl-adenylate intermediate. The polypeptide is Pantothenate synthetase (Azoarcus sp. (strain BH72)).